Consider the following 509-residue polypeptide: MEEIQRYLQPDSSQQHNFLYPLIFQEYIYALAHDHGLNINRSILLENPGYNNQFSLLIVKRLITRMYQQNHFLISTNDSNKNTFLGCNKSLYSQMISEGFAFIVEIPFSLRLISSLSSFEGKKILKSHNLRSIHSTFPFLEDNFSHLNYVLDILIPYPVHLEILVQTLRYWVKDASSLHLLRFFLHEYWNLNSLITSKKPGYSFSKKNKRFFFFLYNSYVYECESTFVFLRNQSSHLRPTSFGALLERIYFYGKIERLVEVFAKDLQVTLWLFKDPFMHYVRYQGKSILASKGTFLLINKWKFYLVNFWQCHFSLCFHTGRIHINQLSNHSRDFMGYLSSVRLNPSMVRSQMLENSFIINNAIKKFDTLVPIIPLIGSLAKENFCTVLGHPISKPVWSDLSDSDIIDRFGRICRNLFHYYSGSSKKKTLYRIKYILRLSCARTLARKHKSTVRTFLKRSGSELLEEFLTSEEQVLSLTFPRASSSLWGVYRSRIWYLDIFCINDLANYQ.

Belongs to the intron maturase 2 family. MatK subfamily.

The protein localises to the plastid. It is found in the chloroplast. Functionally, usually encoded in the trnK tRNA gene intron. Probably assists in splicing its own and other chloroplast group II introns. This Atropa belladonna (Belladonna) protein is Maturase K.